The chain runs to 87 residues: Neurotoxin Cex1 (87 aa).

An N-terminal signal peptide occupies residues 1-19 (MNSLLMITTCLVLFGTVWA). Positions 20 to 85 (KEGYLVSKST…TYPIPGKSCG (66 aa)) constitute an LCN-type CS-alpha/beta domain. Cystine bridges form between cysteine 31–cysteine 84, cysteine 35–cysteine 60, cysteine 44–cysteine 65, and cysteine 48–cysteine 67. Cysteine 84 is modified (cysteine amide). The propeptide occupies 85–87 (GKK).

This sequence belongs to the long (4 C-C) scorpion toxin superfamily. Sodium channel inhibitor family. Beta subfamily. As to expression, expressed by the venom gland.

It is found in the secreted. Beta toxins bind voltage-independently at site-4 of sodium channels (Nav) and shift the voltage of activation toward more negative potentials thereby affecting sodium channel activation and promoting spontaneous and repetitive firing. This chain is Neurotoxin Cex1, found in Centruroides exilicauda (Bark scorpion).